We begin with the raw amino-acid sequence, 182 residues long: UPF0397 protein BA_2640/GBAA_2640/BAS2460 (182 aa).

A run of 5 helical transmembrane segments spans residues 9–29, 40–60, 71–91, 114–134, and 142–162; these read VVAI…GFSI, AILT…IGLI, WSIW…MGFI, ITGL…DIIV, and IVIQ…VLGL.

This sequence belongs to the UPF0397 family.

It is found in the cell membrane. The protein is UPF0397 protein BA_2640/GBAA_2640/BAS2460 of Bacillus anthracis.